A 100-amino-acid polypeptide reads, in one-letter code: Small ribosomal subunit protein uS14c (100 aa).

The interval 1 to 31 (MAKKSLIQREKKRQKLEQKYHSIRRSSKKEI) is disordered.

The protein belongs to the universal ribosomal protein uS14 family. As to quaternary structure, part of the 30S ribosomal subunit.

The protein localises to the plastid. It localises to the chloroplast. Functionally, binds 16S rRNA, required for the assembly of 30S particles. The sequence is that of Small ribosomal subunit protein uS14c from Atropa belladonna (Belladonna).